The primary structure comprises 323 residues: Replication factor C subunit 4 (323 aa).

ATP-binding positions include valine 12, valine 24, 49–57 (GMPGIGKTT), asparagine 145, and arginine 203.

It belongs to the activator 1 small subunits family. Replication factor C (RFC) is a heteropentamer of subunits RFC1, RFC2, RFC3, RFC4 and RFC5 and forms a complex with POL30/PCNA in the presence of ATP. Component of the RAD24-RFC complex which consists of RAD14, RFC2, RFC3, RFC4 and RFC5 and associates with the checkpoint clamp DDC1:MEC3:RAD17 complex. Component of the ELG1-RFC complex which consists of ELG1, RFC2, RFC3, RFC4 and RFC5. Component of the CTF18-RFC complex, which consists of CTF18, CTF8, DCC1, RFC2, RFC3, RFC4 and RFC5. RFC4 interacts with ECO1.

The protein localises to the nucleus. In terms of biological role, component of ATP-dependent clamp loader (RFC and RFC-like) complexes for DNA clamps, such as the POL30/PCNA homotrimer and the checkpoint clamp DDC1:MEC3:RAD17 complex. During a clamp loading circle, the RFC:clamp complex binds to DNA and the recognition of the double-stranded/single-stranded junction stimulates ATP hydrolysis by RFC. The complex presumably provides bipartite ATP sites in which one subunit supplies a catalytic site for hydrolysis of ATP bound to the neighboring subunit. Dissociation of RFC from the clamp leaves the clamp encircling DNA. Component of the replication factor C (RFC or activator 1) complex which loads POL30/PCNA and acts during elongation of primed DNA templates by DNA polymerase delta and epsilon. RFC has an essential but redundant activity in sister chromatid cohesion establishment. Component of the RFC-like complex CTF18-RFC which is required for efficient establishment of chromosome cohesion during S-phase and may load or unload POL30/PCNA. Component of the RFC-like RAD24-RFC complex which loads the checkpoint clamp DDC1:MEC3:RAD17 complex and is involved in DNA repair pathways. Component of the RFC-like ELG1-RFC complex which appears to have a role in DNA replication, replication fork re-start, recombination and repair. In Saccharomyces cerevisiae (strain ATCC 204508 / S288c) (Baker's yeast), this protein is Replication factor C subunit 4 (RFC4).